We begin with the raw amino-acid sequence, 290 residues long: Manganese efflux system protein MneS (290 aa).

6 consecutive transmembrane segments (helical) span residues 15-35, 39-61, 82-102, 113-133, 159-179, and 181-201; these read LVSI…GYLF, ALTA…LIGL, IASL…LFSA, TPDM…LIVY, AFVS…LAWI, and TVTA…IFKE.

Belongs to the cation diffusion facilitator (CDF) transporter (TC 2.A.4) family.

The protein localises to the cell membrane. Secondary manganese efflux system. May prevent manganese intoxication. This Bacillus subtilis (strain 168) protein is Manganese efflux system protein MneS.